A 314-amino-acid polypeptide reads, in one-letter code: BURP domain-containing protein 8 (314 aa).

The N-terminal stretch at 1–16 (MDLVRLTSLLPPSVMG) is a signal peptide. Residues 98 to 314 (FFLEKDLFPG…PLGDMLWVRN (217 aa)) form the BURP domain.

In terms of tissue distribution, expressed in shoot and panicles.

The polypeptide is BURP domain-containing protein 8 (BURP8) (Oryza sativa subsp. japonica (Rice)).